The chain runs to 477 residues: 3-isopropylmalate dehydratase large subunit (477 aa).

Residues Cys-347, Cys-407, and Cys-410 each contribute to the [4Fe-4S] cluster site. The tract at residues 418–442 (LAPGERSASTSNRNFEGRQGKGGRT) is disordered.

This sequence belongs to the aconitase/IPM isomerase family. LeuC type 1 subfamily. As to quaternary structure, heterodimer of LeuC and LeuD. The cofactor is [4Fe-4S] cluster.

It catalyses the reaction (2R,3S)-3-isopropylmalate = (2S)-2-isopropylmalate. It participates in amino-acid biosynthesis; L-leucine biosynthesis; L-leucine from 3-methyl-2-oxobutanoate: step 2/4. In terms of biological role, catalyzes the isomerization between 2-isopropylmalate and 3-isopropylmalate, via the formation of 2-isopropylmaleate. This chain is 3-isopropylmalate dehydratase large subunit, found in Streptomyces avermitilis (strain ATCC 31267 / DSM 46492 / JCM 5070 / NBRC 14893 / NCIMB 12804 / NRRL 8165 / MA-4680).